A 214-amino-acid chain; its full sequence is uncharacterized protein (214 aa).

This sequence belongs to the uracil-DNA glycosylase (UDG) superfamily.

This is an uncharacterized protein from Haemophilus influenzae (strain ATCC 51907 / DSM 11121 / KW20 / Rd).